Here is a 217-residue protein sequence, read N- to C-terminus: Endo-1,4-beta-xylanase (217 aa).

Residues 1–17 (MQFLIPVVILCVSLVDS) form the signal peptide. The region spanning 20 to 217 (VLYNNEIGFN…SSGFADITVS (198 aa)) is the GH11 domain. N-linked (GlcNAc...) asparagine glycans are attached at residues N56 and N80. E107 acts as the Nucleophile in catalysis. E204 serves as the catalytic Proton donor.

It belongs to the glycosyl hydrolase 11 (cellulase G) family. Expressed in larval carcasses and gut, and adult gut.

Its subcellular location is the secreted. It catalyses the reaction Endohydrolysis of (1-&gt;4)-beta-D-xylosidic linkages in xylans.. Its pathway is glycan degradation; xylan degradation. The chain is Endo-1,4-beta-xylanase from Phaedon cochleariae (Mustard beetle).